The primary structure comprises 1238 residues: Virulence sensor protein BvgS (1238 aa).

Residues 1–30 (MPAPHRLYPRSLICLAQALLAWALLAWAPA) form the signal peptide. Topologically, residues 33–307 (SQELTLVGKA…REQQWMANHP (275 aa)) are cytoplasmic. Residues 308–331 (VVKVAVLNLFAPFTLFRTDEQFGG) traverse the membrane as a helical segment. The Periplasmic portion of the chain corresponds to 332-541 (ISAAVLQLLQ…PRTWYAYRNE (210 aa)). Residues 542-563 (IYLLIGLGLLSALLFLSWIVYL) traverse the membrane as a helical segment. The Cytoplasmic portion of the chain corresponds to 564–1238 (RRQIRQRKRA…LEQRPHQGQP (675 aa)). Residues 580–651 (QLEFMRVLID…MHEFLLTRMS (72 aa)) enclose the PAS domain. Residues 652 to 708 (AEREPRFEDRDVTLHGRTRHVYQWTVPYGDSLGELKGIIGGWIDITERAELLRELHD) enclose the PAC domain. Residues 726-948 (TMSHEIRTPM…TVSVDLRLTM (223 aa)) enclose the Histidine kinase domain. H729 is modified (phosphohistidine; by autocatalysis). The region spanning 974 to 1095 (RVLVVDDHKP…ALRQRLNEAA (122 aa)) is the Response regulatory domain. A 4-aspartylphosphate modification is found at D1023. The HPt domain maps to 1133-1228 (DEALIRQLLE…AALETQLRAW (96 aa)). The residue at position 1172 (H1172) is a Phosphohistidine.

Activation requires a sequential transfer of a phosphate group from a His in the primary transmitter domain, to an Asp in the receiver domain and to a His in the secondary transmitter domain.

The protein resides in the cell inner membrane. The catalysed reaction is ATP + protein L-histidine = ADP + protein N-phospho-L-histidine.. In terms of biological role, member of the two-component regulatory system BvgS/BvgA. Phosphorylates BvgA via a four-step phosphorelay in response to environmental signals. The chain is Virulence sensor protein BvgS (bvgS) from Bordetella bronchiseptica (strain ATCC BAA-588 / NCTC 13252 / RB50) (Alcaligenes bronchisepticus).